The primary structure comprises 206 residues: Ras-related protein RABG3c (206 aa).

A GTP-binding site is contributed by 15-22 (GDSGVGKT). Residues 37 to 45 (YKATIGADF) carry the Effector region motif. GTP-binding positions include 63–67 (DTAGQ), 125–128 (NKTD), and 158–159 (SA). Residues C204 and C206 are each lipidated (S-geranylgeranyl cysteine). C206 is modified (cysteine methyl ester).

The protein belongs to the small GTPase superfamily. Rab family.

It localises to the cell membrane. Functionally, intracellular vesicle trafficking and protein transport. The protein is Ras-related protein RABG3c (RABG3C) of Arabidopsis thaliana (Mouse-ear cress).